We begin with the raw amino-acid sequence, 394 residues long: Subtilisin-like protease 4 (394 aa).

A signal peptide spans Cys1–Ala17. Residues Arg18–Ser116 constitute a propeptide that is removed on maturation. Residues Tyr36 to Ile115 form the Inhibitor I9 domain. N-linked (GlcNAc...) asparagine glycosylation occurs at Asn100. Positions Ser126–Gly394 constitute a Peptidase S8 domain. Catalysis depends on charge relay system residues Asp158 and His189. N-linked (GlcNAc...) asparagine glycans are attached at residues Asn250 and Asn306. The Charge relay system role is filled by Ser344.

This sequence belongs to the peptidase S8 family.

Its subcellular location is the secreted. Functionally, secreted subtilisin-like serine protease with keratinolytic activity that contributes to pathogenicity. This Trichophyton equinum (Horse ringworm fungus) protein is Subtilisin-like protease 4 (SUB4).